A 217-amino-acid polypeptide reads, in one-letter code: NAD(P)H-hydrate epimerase (217 aa).

The region spanning 1-217 (MRAIENAAMA…VAVADIGLSS (217 aa)) is the YjeF N-terminal domain. 48–52 (NNGGD) serves as a coordination point for (6S)-NADPHX. K(+)-binding residues include asparagine 49 and aspartate 127. (6S)-NADPHX contacts are provided by residues 131–137 (GIGQTRP) and aspartate 165. Residue threonine 168 coordinates K(+).

This sequence belongs to the NnrE/AIBP family. It depends on K(+) as a cofactor.

It catalyses the reaction (6R)-NADHX = (6S)-NADHX. The catalysed reaction is (6R)-NADPHX = (6S)-NADPHX. In terms of biological role, catalyzes the epimerization of the S- and R-forms of NAD(P)HX, a damaged form of NAD(P)H that is a result of enzymatic or heat-dependent hydration. This is a prerequisite for the S-specific NAD(P)H-hydrate dehydratase to allow the repair of both epimers of NAD(P)HX. This Cereibacter sphaeroides (strain KD131 / KCTC 12085) (Rhodobacter sphaeroides) protein is NAD(P)H-hydrate epimerase.